A 312-amino-acid polypeptide reads, in one-letter code: Ribose-phosphate pyrophosphokinase (312 aa).

ATP contacts are provided by residues 34–36 and 93–94; these read DLE and RQ. Mg(2+) is bound by residues His-127 and Asp-168. Residue Lys-192 is part of the active site. D-ribose 5-phosphate is bound by residues Arg-194, Asp-218, and 222 to 226; that span reads DSAGT.

Belongs to the ribose-phosphate pyrophosphokinase family. Class I subfamily. Homohexamer. Mg(2+) is required as a cofactor.

The protein localises to the cytoplasm. It catalyses the reaction D-ribose 5-phosphate + ATP = 5-phospho-alpha-D-ribose 1-diphosphate + AMP + H(+). Its pathway is metabolic intermediate biosynthesis; 5-phospho-alpha-D-ribose 1-diphosphate biosynthesis; 5-phospho-alpha-D-ribose 1-diphosphate from D-ribose 5-phosphate (route I): step 1/1. Involved in the biosynthesis of the central metabolite phospho-alpha-D-ribosyl-1-pyrophosphate (PRPP) via the transfer of pyrophosphoryl group from ATP to 1-hydroxyl of ribose-5-phosphate (Rib-5-P). The polypeptide is Ribose-phosphate pyrophosphokinase (Caulobacter vibrioides (strain ATCC 19089 / CIP 103742 / CB 15) (Caulobacter crescentus)).